An 878-amino-acid polypeptide reads, in one-letter code: Leucine--tRNA ligase (878 aa).

A 'HIGH' region motif is present at residues Pro43–His53. The 'KMSKS' region motif lies at Lys630–Ser634. Residue Lys633 participates in ATP binding.

Belongs to the class-I aminoacyl-tRNA synthetase family.

The protein resides in the cytoplasm. It catalyses the reaction tRNA(Leu) + L-leucine + ATP = L-leucyl-tRNA(Leu) + AMP + diphosphate. The polypeptide is Leucine--tRNA ligase (Nitrobacter hamburgensis (strain DSM 10229 / NCIMB 13809 / X14)).